Consider the following 260-residue polypeptide: Factor V activator RVV-V gamma (260 aa).

An N-terminal signal peptide occupies residues 1 to 18 (MVLIKVLANLLVLQLSYA). A propeptide spanning residues 19–24 (QKSSEL) is cleaved from the precursor. The Peptidase S1 domain maps to 25–251 (VVGGDECNIN…YNNWIQSIIA (227 aa)). Intrachain disulfides connect cysteine 31/cysteine 165, cysteine 52/cysteine 68, cysteine 100/cysteine 258, cysteine 144/cysteine 212, cysteine 176/cysteine 191, and cysteine 202/cysteine 227. Active-site charge relay system residues include histidine 67 and aspartate 112. Serine 206 (charge relay system) is an active-site residue. N-linked (GlcNAc...) asparagine glycosylation occurs at asparagine 253.

The protein belongs to the peptidase S1 family. Snake venom subfamily. In terms of assembly, monomer. Expressed by the venom gland.

It localises to the secreted. It catalyses the reaction Fully activates human clotting factor V by a single cleavage at the 1545-Trp-Tyr-Leu-Arg-|-Ser-Asn-Asn-Gly-1552 bond. Cattle, but not rabbit, factor V is cleaved, and no other proteins of the clotting system are attacked. Esterase activity is observed on Bz-Arg-OEt and Tos-Arg-OMe, and amidase activity on Phe-pipecolyl-Arg-NHPhNO2.. Functionally, venom serine protease that selectively activates factor V (F5) in a calcium-independent manner. It cleaves the Arg(1545)-Ser(1546) linkage in the human factor V molecule. Induces the coagulation of mammalian plasma. This is Factor V activator RVV-V gamma from Daboia siamensis (Eastern Russel's viper).